Here is a 95-residue protein sequence, read N- to C-terminus: Aspartyl/glutamyl-tRNA(Asn/Gln) amidotransferase subunit C (95 aa).

The protein belongs to the GatC family. In terms of assembly, heterotrimer of A, B and C subunits.

It carries out the reaction L-glutamyl-tRNA(Gln) + L-glutamine + ATP + H2O = L-glutaminyl-tRNA(Gln) + L-glutamate + ADP + phosphate + H(+). It catalyses the reaction L-aspartyl-tRNA(Asn) + L-glutamine + ATP + H2O = L-asparaginyl-tRNA(Asn) + L-glutamate + ADP + phosphate + 2 H(+). Functionally, allows the formation of correctly charged Asn-tRNA(Asn) or Gln-tRNA(Gln) through the transamidation of misacylated Asp-tRNA(Asn) or Glu-tRNA(Gln) in organisms which lack either or both of asparaginyl-tRNA or glutaminyl-tRNA synthetases. The reaction takes place in the presence of glutamine and ATP through an activated phospho-Asp-tRNA(Asn) or phospho-Glu-tRNA(Gln). The chain is Aspartyl/glutamyl-tRNA(Asn/Gln) amidotransferase subunit C from Syntrophotalea carbinolica (strain DSM 2380 / NBRC 103641 / GraBd1) (Pelobacter carbinolicus).